Reading from the N-terminus, the 277-residue chain is Phosphate import ATP-binding protein PstB 2 (277 aa).

Positions 31–272 constitute an ABC transporter domain; that stretch reads IEVPGLNLFY…PAKKQTEDYI (242 aa). 63–70 provides a ligand contact to ATP; that stretch reads GPSGCGKS.

It belongs to the ABC transporter superfamily. Phosphate importer (TC 3.A.1.7) family. As to quaternary structure, the complex is composed of two ATP-binding proteins (PstB), two transmembrane proteins (PstC and PstA) and a solute-binding protein (PstS).

The protein resides in the cell inner membrane. It carries out the reaction phosphate(out) + ATP + H2O = ADP + 2 phosphate(in) + H(+). In terms of biological role, part of the ABC transporter complex PstSACB involved in phosphate import. Responsible for energy coupling to the transport system. This Pseudomonas syringae pv. syringae (strain B728a) protein is Phosphate import ATP-binding protein PstB 2.